The primary structure comprises 231 residues: Large ribosomal subunit protein uL1 (231 aa).

This sequence belongs to the universal ribosomal protein uL1 family. Part of the 50S ribosomal subunit.

In terms of biological role, binds directly to 23S rRNA. The L1 stalk is quite mobile in the ribosome, and is involved in E site tRNA release. Protein L1 is also a translational repressor protein, it controls the translation of the L11 operon by binding to its mRNA. In Pseudomonas syringae pv. syringae (strain B728a), this protein is Large ribosomal subunit protein uL1.